The primary structure comprises 508 residues: Proline--tRNA ligase 2 (508 aa).

It belongs to the class-II aminoacyl-tRNA synthetase family. ProS type 3 subfamily. As to quaternary structure, homodimer.

It localises to the cytoplasm. The enzyme catalyses tRNA(Pro) + L-proline + ATP = L-prolyl-tRNA(Pro) + AMP + diphosphate. Its function is as follows. Catalyzes the attachment of proline to tRNA(Pro) in a two-step reaction: proline is first activated by ATP to form Pro-AMP and then transferred to the acceptor end of tRNA(Pro). This Bacillus anthracis protein is Proline--tRNA ligase 2.